The following is a 248-amino-acid chain: Mannose-binding protein C (248 aa).

A signal peptide spans 1–20 (MSLFPSLTLLLLSVVATSYS). The 58-residue stretch at 42–99 (GINGFPGKDGRDGTKGEKGEPGQGLRGLQGPPGKLGPPGNPGSSGSPGPKGQKGDPGE) folds into the Collagen-like domain. Residues 43–113 (INGFPGKDGR…DSSLAASERK (71 aa)) are disordered. At proline 47 the chain carries 4-hydroxyproline. Over residues 49–61 (KDGRDGTKGEKGE) the composition is skewed to basic and acidic residues. Residues proline 73, proline 79, proline 82, and proline 88 each carry the 4-hydroxyproline modification. Residues 82–91 (PGSSGSPGPK) are compositionally biased toward low complexity. Positions 112 to 130 (RKALQTEMARIKKWLTFSL) form a coiled coil. The 112-residue stretch at 134 to 245 (VGNKFFLTNG…CSSSHLALCE (112 aa)) folds into the C-type lectin domain. Cystine bridges form between cysteine 155–cysteine 244 and cysteine 222–cysteine 236.

Oligomeric complex of 3 or more homotrimers. Interacts with MASP1 and MASP2. Interacts with MEP1A and MEP1B and may inhibit their catalytic activity. Hydroxylation on proline residues within the sequence motif, GXPG, is most likely to be 4-hydroxy as this fits the requirement for 4-hydroxylation in vertebrates.

It localises to the secreted. Calcium-dependent lectin involved in innate immune defense. Binds mannose, fucose and N-acetylglucosamine on different microorganisms and activates the lectin complement pathway. Binds to late apoptotic cells, as well as to apoptotic blebs and to necrotic cells, but not to early apoptotic cells, facilitating their uptake by macrophages. This Chlorocebus aethiops (Green monkey) protein is Mannose-binding protein C (MBL2).